A 597-amino-acid chain; its full sequence is Siderophore iron transporter 2 (597 aa).

Position 46 is a phosphoserine (Ser-46). The next 14 membrane-spanning stretches (helical) occupy residues 65 to 85, 97 to 117, 131 to 151, 159 to 179, 190 to 210, 225 to 245, 281 to 301, 312 to 332, 357 to 377, 390 to 410, 419 to 439, 448 to 468, 485 to 505, and 558 to 578; these read IIVA…EQQT, FSAH…LAVV, SESL…LAFS, VAYI…QLII, ILSA…PVLA, YGIW…SLFL, LDGL…LPFS, TILT…LCFY, VLIF…TSFL, LTLN…GFLM, LLMI…LFGI, LVLV…SAQI, LYLT…GGVW, and KDLF…LVII.

Belongs to the major facilitator superfamily.

Its subcellular location is the membrane. Functionally, involved in the transport of siderophore iron and so has a role in iron homeostasis. In Schizosaccharomyces pombe (strain 972 / ATCC 24843) (Fission yeast), this protein is Siderophore iron transporter 2 (str2).